A 183-amino-acid chain; its full sequence is Gamma-crystallin N-B (183 aa).

Beta/gamma crystallin 'Greek key' domains lie at 6–46, 47–89, 95–136, and 138–180; these read GKIC…RVES, GAWI…RPIR, YRME…RVFG, and GAWV…RRIV.

This sequence belongs to the beta/gamma-crystallin family. As to quaternary structure, monomer.

Crystallins are the dominant structural components of the vertebrate eye lens. This chain is Gamma-crystallin N-B (crygnb), found in Danio rerio (Zebrafish).